The primary structure comprises 175 residues: Translation initiation factor IF-3 (175 aa).

The protein belongs to the IF-3 family. In terms of assembly, monomer.

The protein resides in the cytoplasm. IF-3 binds to the 30S ribosomal subunit and shifts the equilibrium between 70S ribosomes and their 50S and 30S subunits in favor of the free subunits, thus enhancing the availability of 30S subunits on which protein synthesis initiation begins. The sequence is that of Translation initiation factor IF-3 from Staphylococcus aureus (strain MRSA252).